Reading from the N-terminus, the 538-residue chain is Chaperonin GroEL (538 aa).

ATP is bound by residues 30 to 33 (TLGP), 87 to 91 (DGTTT), G415, 479 to 481 (DAA), and D495.

The protein belongs to the chaperonin (HSP60) family. Forms a cylinder of 14 subunits composed of two heptameric rings stacked back-to-back. Interacts with the co-chaperonin GroES.

Its subcellular location is the cytoplasm. The catalysed reaction is ATP + H2O + a folded polypeptide = ADP + phosphate + an unfolded polypeptide.. Together with its co-chaperonin GroES, plays an essential role in assisting protein folding. The GroEL-GroES system forms a nano-cage that allows encapsulation of the non-native substrate proteins and provides a physical environment optimized to promote and accelerate protein folding. The polypeptide is Chaperonin GroEL (Dictyoglomus turgidum (strain DSM 6724 / Z-1310)).